The sequence spans 230 residues: Uracil phosphoribosyltransferase (230 aa).

Residue 38-42 (KGLVK) coordinates GTP. 5-phospho-alpha-D-ribose 1-diphosphate is bound by residues arginine 87, arginine 112, and 140–148 (DPMIATGST). Uracil contacts are provided by residues isoleucine 204 and 209-211 (GDA). Aspartate 210 provides a ligand contact to 5-phospho-alpha-D-ribose 1-diphosphate.

Belongs to the UPRTase family. It depends on Mg(2+) as a cofactor.

The enzyme catalyses UMP + diphosphate = 5-phospho-alpha-D-ribose 1-diphosphate + uracil. Its pathway is pyrimidine metabolism; UMP biosynthesis via salvage pathway; UMP from uracil: step 1/1. With respect to regulation, allosterically activated by GTP. Catalyzes the conversion of uracil and 5-phospho-alpha-D-ribose 1-diphosphate (PRPP) to UMP and diphosphate. In Thermococcus kodakarensis (strain ATCC BAA-918 / JCM 12380 / KOD1) (Pyrococcus kodakaraensis (strain KOD1)), this protein is Uracil phosphoribosyltransferase.